The chain runs to 696 residues: Verrucotoxin subunit beta (696 aa).

The B30.2/SPRY domain maps to 506-696 (HMPGVETIKD…GCTTESQWSN (191 aa)).

Belongs to the SNTX/VTX toxin family. In terms of assembly, tetramer composed of 2 alpha and 2 beta subunits. Post-translationally, glycosylated. Expressed by the venom gland.

Its subcellular location is the secreted. Functionally, this lethal (towards mice) toxin induces hemolytic, cytolytic and hypotensive activities. Inhibits calcium channels and may activate ATP-sensitive potassium channels in frog atrial heart muscle. In guinea-pig ventricular myocytes, it modulates calcium channel activity through the beta-adrenoceptor-cAMP-PKA pathway (ADRB). This is Verrucotoxin subunit beta from Synanceia verrucosa (Reef stonefish).